A 364-amino-acid polypeptide reads, in one-letter code: MPKPAIKTAAKPATSSAGKRGKPNTPKSVAKPKTAKPKTASKPKVKPGEKKRLHPRNLHINGYDFPALMASYPKLKAFVRPTPYGALSIDFADPLAVKTLNAALLLHHYGLAFWDIPKGALCPPIPGRVDYLHYLADLLFEGGKVKRAAAIRALDIGTGANGVYAILGHQVYDWQFVASDINPQSLTNVQRIIDNNPSLQGHLSLRRQQDDKAVFKGIIQASDRFELTLCNPPFHGSLKEASEGSLRKVRNLQLNRGEQPKATSATLNFGGQAAELWCQGGEKQFLATMIRESQAFAEQCLWFTSLVSKQENLKPCYQALEKLGVDTVKTIEMQQGNKFTRVLAWSFHSQAKRLQWRNQIVSGT.

The segment covering 1-17 (MPKPAIKTAAKPATSSA) has biased composition (low complexity). Residues 1–53 (MPKPAIKTAAKPATSSAGKRGKPNTPKSVAKPKTAKPKTASKPKVKPGEKKRL) form a disordered region. Positions 33–53 (KTAKPKTASKPKVKPGEKKRL) are enriched in basic residues.

This sequence belongs to the methyltransferase superfamily. METTL16/RlmF family.

It localises to the cytoplasm. The catalysed reaction is adenosine(1618) in 23S rRNA + S-adenosyl-L-methionine = N(6)-methyladenosine(1618) in 23S rRNA + S-adenosyl-L-homocysteine + H(+). Its function is as follows. Specifically methylates the adenine in position 1618 of 23S rRNA. This chain is Ribosomal RNA large subunit methyltransferase F, found in Shewanella sp. (strain MR-7).